A 346-amino-acid chain; its full sequence is MSFRTIEWRDNKVIMIDQTRLPAEEVYNEYTDFQGVAQAIRGMVVRGAPAIGIAAAMGVALGAREIIADSFDTFYRQLENVCEVIGRTRPTAVNLFWGLERMKRVALQHKELNLNSIRELLKAEAISIETEDLAICKEIGRHGAALVKEGASILTHCNAGGLATAGYGTALGVIRGAHEAGKGIRVFADETRPWLQGARLTAWELMKDSIPVTLISDNMAGWLMKTGQIDFCVVGADRIAANGDTANKIGTYSVAVLAKENRIPFYVAAPISTLDLKLANGDLIPIEERASEEVTQIKGIQIAPEGVKVRNPAFDVTPARYITGIITEKGVVRGDYERELKALVGQ.

Residues 46 to 48, Arg89, and Gln196 each bind substrate; that span reads RGA. Asp237 serves as the catalytic Proton donor. 247–248 contributes to the substrate binding site; the sequence is NK.

It belongs to the eIF-2B alpha/beta/delta subunits family. MtnA subfamily.

The enzyme catalyses 5-(methylsulfanyl)-alpha-D-ribose 1-phosphate = 5-(methylsulfanyl)-D-ribulose 1-phosphate. Its pathway is amino-acid biosynthesis; L-methionine biosynthesis via salvage pathway; L-methionine from S-methyl-5-thio-alpha-D-ribose 1-phosphate: step 1/6. In terms of biological role, catalyzes the interconversion of methylthioribose-1-phosphate (MTR-1-P) into methylthioribulose-1-phosphate (MTRu-1-P). In Citrifermentans bemidjiense (strain ATCC BAA-1014 / DSM 16622 / JCM 12645 / Bem) (Geobacter bemidjiensis), this protein is Methylthioribose-1-phosphate isomerase.